The following is a 220-amino-acid chain: Ripening-related protein grip22 (220 aa).

An N-terminal signal peptide occupies residues 1 to 27; the sequence is MAKSALVWLASVCLVFNILSLPFLALG.

Belongs to the kiwellin family. In terms of tissue distribution, expressed in ripening fruits.

The protein resides in the secreted. The polypeptide is Ripening-related protein grip22 (grip22) (Vitis vinifera (Grape)).